Consider the following 699-residue polypeptide: Elongation factor G (699 aa).

One can recognise a tr-type G domain in the interval 10–292 (NRTRNIGIMA…AVIDYLPSPT (283 aa)). GTP contacts are provided by residues 19-26 (AHIDAGKT), 90-94 (DTPGH), and 144-147 (NKMD). Residues 292 to 312 (TDVPAIRGEEDDGSEGSRSAS) form a disordered region.

This sequence belongs to the TRAFAC class translation factor GTPase superfamily. Classic translation factor GTPase family. EF-G/EF-2 subfamily.

It localises to the cytoplasm. Its function is as follows. Catalyzes the GTP-dependent ribosomal translocation step during translation elongation. During this step, the ribosome changes from the pre-translocational (PRE) to the post-translocational (POST) state as the newly formed A-site-bound peptidyl-tRNA and P-site-bound deacylated tRNA move to the P and E sites, respectively. Catalyzes the coordinated movement of the two tRNA molecules, the mRNA and conformational changes in the ribosome. This Coxiella burnetii (strain RSA 331 / Henzerling II) protein is Elongation factor G.